Reading from the N-terminus, the 326-residue chain is Eukaryotic translation initiation factor 3 subunit I (326 aa).

WD repeat units lie at residues 8–47, 50–89, 145–184, 188–227, and 285–326; these read GHER…RLGT, GHQG…VIAS, MVES…KVVD, DHAA…CLKT, and GHFG…NIFE.

It belongs to the eIF-3 subunit I family. As to quaternary structure, component of the eukaryotic translation initiation factor 3 (eIF-3) complex. The eIF-3 complex interacts with pix.

Its subcellular location is the cytoplasm. Its function is as follows. Component of the eukaryotic translation initiation factor 3 (eIF-3) complex, which is involved in protein synthesis of a specialized repertoire of mRNAs and, together with other initiation factors, stimulates binding of mRNA and methionyl-tRNAi to the 40S ribosome. The eIF-3 complex specifically targets and initiates translation of a subset of mRNAs involved in cell proliferation. The protein is Eukaryotic translation initiation factor 3 subunit I of Drosophila grimshawi (Hawaiian fruit fly).